Consider the following 120-residue polypeptide: MKLIKVTLVFSLLALVFVAQTEAQNPIWENWLACNRIGTKALASLLRETIPTVRNLLNCIDFNPPTDIGNSYLSKLKLYYELVKRGALDKTQCLIVPLKESVRLLRPYVKSLETNKCLGE.

A signal peptide spans 1–23 (MKLIKVTLVFSLLALVFVAQTEA).

As to expression, main cells of accessory gland and seminal fluid.

The protein localises to the secreted. In terms of biological role, responsible for physiological and behavioral changes in mated female flies. The sequence is that of Accessory gland protein Acp53Ea (Acp53Ea) from Drosophila melanogaster (Fruit fly).